A 488-amino-acid polypeptide reads, in one-letter code: Protein nucleotidyltransferase YdiU (488 aa).

The ATP site is built by G91, G93, R94, K114, D126, G127, R177, and R184. D253 functions as the Proton acceptor in the catalytic mechanism. Mg(2+)-binding residues include N254 and D263. D263 provides a ligand contact to ATP.

The protein belongs to the SELO family. Mg(2+) serves as cofactor. The cofactor is Mn(2+).

The enzyme catalyses L-seryl-[protein] + ATP = 3-O-(5'-adenylyl)-L-seryl-[protein] + diphosphate. The catalysed reaction is L-threonyl-[protein] + ATP = 3-O-(5'-adenylyl)-L-threonyl-[protein] + diphosphate. It carries out the reaction L-tyrosyl-[protein] + ATP = O-(5'-adenylyl)-L-tyrosyl-[protein] + diphosphate. It catalyses the reaction L-histidyl-[protein] + UTP = N(tele)-(5'-uridylyl)-L-histidyl-[protein] + diphosphate. The enzyme catalyses L-seryl-[protein] + UTP = O-(5'-uridylyl)-L-seryl-[protein] + diphosphate. The catalysed reaction is L-tyrosyl-[protein] + UTP = O-(5'-uridylyl)-L-tyrosyl-[protein] + diphosphate. Nucleotidyltransferase involved in the post-translational modification of proteins. It can catalyze the addition of adenosine monophosphate (AMP) or uridine monophosphate (UMP) to a protein, resulting in modifications known as AMPylation and UMPylation. The polypeptide is Protein nucleotidyltransferase YdiU (Bacillus cereus (strain ZK / E33L)).